The following is a 146-amino-acid chain: VEWTNFERATIKDIFSKLEYDVVGPATLARCLVVYPWTQRYFGKFGNLYNAAAIAENAMVSKHGTTIIHGLDQAVKNMDDIKNTYAELSVLHCDKLHVDPDNFQLLAECLTIVLAAQLGKEFTGEVQAAFQKFMAVVVSSLGKQYH.

A Globin domain is found at 2-146 (EWTNFERATI…VVSSLGKQYH (145 aa)). Residues His-63 and His-92 each contribute to the heme b site.

This sequence belongs to the globin family. Hb2 is a heterotetramer of two alpha chains and two beta-2 chains. Red blood cells.

Involved in oxygen transport from gills to the various peripheral tissues. This chain is Hemoglobin subunit beta-2 (hbb2), found in Cygnodraco mawsoni (Antarctic dragonfish).